Reading from the N-terminus, the 166-residue chain is ATP synthase subunit b (166 aa).

The chain crosses the membrane as a helical span at residues 8–28 (FSFGLFFWQALILVILILLLV).

It belongs to the ATPase B chain family. In terms of assembly, F-type ATPases have 2 components, F(1) - the catalytic core - and F(0) - the membrane proton channel. F(1) has five subunits: alpha(3), beta(3), gamma(1), delta(1), epsilon(1). F(0) has three main subunits: a(1), b(2) and c(10-14). The alpha and beta chains form an alternating ring which encloses part of the gamma chain. F(1) is attached to F(0) by a central stalk formed by the gamma and epsilon chains, while a peripheral stalk is formed by the delta and b chains.

It localises to the cell inner membrane. Its function is as follows. F(1)F(0) ATP synthase produces ATP from ADP in the presence of a proton or sodium gradient. F-type ATPases consist of two structural domains, F(1) containing the extramembraneous catalytic core and F(0) containing the membrane proton channel, linked together by a central stalk and a peripheral stalk. During catalysis, ATP synthesis in the catalytic domain of F(1) is coupled via a rotary mechanism of the central stalk subunits to proton translocation. Component of the F(0) channel, it forms part of the peripheral stalk, linking F(1) to F(0). The polypeptide is ATP synthase subunit b (Flavobacterium johnsoniae (strain ATCC 17061 / DSM 2064 / JCM 8514 / BCRC 14874 / CCUG 350202 / NBRC 14942 / NCIMB 11054 / UW101) (Cytophaga johnsonae)).